We begin with the raw amino-acid sequence, 444 residues long: Na(+)-translocating NADH-quinone reductase subunit A (444 aa).

It belongs to the NqrA family. Composed of six subunits; NqrA, NqrB, NqrC, NqrD, NqrE and NqrF.

It catalyses the reaction a ubiquinone + n Na(+)(in) + NADH + H(+) = a ubiquinol + n Na(+)(out) + NAD(+). Its function is as follows. NQR complex catalyzes the reduction of ubiquinone-1 to ubiquinol by two successive reactions, coupled with the transport of Na(+) ions from the cytoplasm to the periplasm. NqrA to NqrE are probably involved in the second step, the conversion of ubisemiquinone to ubiquinol. The protein is Na(+)-translocating NADH-quinone reductase subunit A of Shewanella amazonensis (strain ATCC BAA-1098 / SB2B).